The sequence spans 349 residues: Ferredoxin--NADP reductase (349 aa).

Residues D35, Q43, Y48, V88, F123, D288, and T329 each coordinate FAD.

It belongs to the ferredoxin--NADP reductase type 2 family. Homodimer. The cofactor is FAD.

It catalyses the reaction 2 reduced [2Fe-2S]-[ferredoxin] + NADP(+) + H(+) = 2 oxidized [2Fe-2S]-[ferredoxin] + NADPH. This chain is Ferredoxin--NADP reductase, found in Colwellia psychrerythraea (strain 34H / ATCC BAA-681) (Vibrio psychroerythus).